We begin with the raw amino-acid sequence, 496 residues long: N-acetylmuramoyl-L-alanine amidase LytC (496 aa).

An N-terminal signal peptide occupies residues 1-24 (MRSYIKVLTMCFLGLILFVPTALA). 3 repeat units span residues 30–128 (RVGG…ISIK), 129–222 (RIAG…PSPT), and 223–318 (RISG…NPVV). A 3 X tandem repeats region spans residues 30 to 318 (RVGGSNRYGT…VANQLKNPVV (289 aa)). The MurNAc-LAA domain occupies 322–490 (IFIDPGHGDQ…DKAAQAIHDG (169 aa)).

It belongs to the N-acetylmuramoyl-L-alanine amidase 3 family.

It localises to the secreted. The protein localises to the cell wall. It catalyses the reaction Hydrolyzes the link between N-acetylmuramoyl residues and L-amino acid residues in certain cell-wall glycopeptides.. Its function is as follows. Autolysins are cell wall hydrolases involved in some important biological processes such as cell separation, cell-wall turnover, competence for genetic transformation, formation of the flagella - in particular of its basal body - and sporulation. Has a high affinity for teichoic acid-endowed peptidoglycan. LytC is required for efficient swarming motility but not at the level of cell separation or flagellum biosynthesis. Rather, LytC appears to be important for proper flagellar function. The protein is N-acetylmuramoyl-L-alanine amidase LytC (lytC) of Bacillus subtilis (strain 168).